The following is a 194-amino-acid chain: Imidazoleglycerol-phosphate dehydratase (194 aa).

Belongs to the imidazoleglycerol-phosphate dehydratase family.

The protein resides in the cytoplasm. It catalyses the reaction D-erythro-1-(imidazol-4-yl)glycerol 3-phosphate = 3-(imidazol-4-yl)-2-oxopropyl phosphate + H2O. It participates in amino-acid biosynthesis; L-histidine biosynthesis; L-histidine from 5-phospho-alpha-D-ribose 1-diphosphate: step 6/9. This is Imidazoleglycerol-phosphate dehydratase from Bacillus cereus (strain AH820).